The primary structure comprises 237 residues: Class B acid phosphatase (237 aa).

Positions 1-23 (MKKITLALSAVCLLFTLNHSANA) are cleaved as a signal peptide. Residue aspartate 69 is the Nucleophile of the active site. Aspartate 69 and aspartate 71 together coordinate Mg(2+). Aspartate 71 functions as the Proton donor in the catalytic mechanism. Residues 137–138 (TG) and lysine 177 each bind substrate. Aspartate 192 serves as a coordination point for Mg(2+).

This sequence belongs to the class B bacterial acid phosphatase family. In terms of assembly, homotetramer. Mg(2+) is required as a cofactor.

The protein localises to the periplasm. It catalyses the reaction a phosphate monoester + H2O = an alcohol + phosphate. Dephosphorylates several organic phosphate monoesters including monophosphate nucleotides (NMPs), coenzyme A (CoA), nicotinamide adenine dinucleotide phosphate (NADP), flavin mononucleotide (FMN) and phosphorylated 5-6 carbon sugars in vitro. Also has a phosphotransferase activity catalyzing the transfer of low-energy phosphate groups from organic phosphate monoesters to free hydroxyl groups of various organic compounds. The sequence is that of Class B acid phosphatase (aphA) from Salmonella typhi.